A 728-amino-acid polypeptide reads, in one-letter code: Catalase B (728 aa).

An N-terminal signal peptide occupies residues 1–15 (MRLTFIPSLIGVANA). Residues 16 to 27 (VCPYMTGELNRR) constitute a propeptide that is removed on maturation. H102 is an active-site residue. N120 carries N-linked (GlcNAc...) asparagine glycosylation. N175 is a catalytic residue. Y389 lines the heme pocket. N-linked (GlcNAc...) asparagine glycans are attached at residues N448 and N551.

This sequence belongs to the catalase family. As to quaternary structure, homotetramer. Heme is required as a cofactor. N-glycosylated.

The protein localises to the secreted. The enzyme catalyses 2 H2O2 = O2 + 2 H2O. Functionally, occurs in almost all aerobically respiring organisms and serves to protect cells from the toxic effects of hydrogen peroxide. This chain is Catalase B (catB), found in Aspergillus fumigatus (strain ATCC MYA-4609 / CBS 101355 / FGSC A1100 / Af293) (Neosartorya fumigata).